An 843-amino-acid polypeptide reads, in one-letter code: Probable disease resistance protein At5g47250 (843 aa).

A coiled-coil region spans residues 28–58 (MLKENLVLLKSAFDELKAEKEDVVNRVNAGE). One can recognise an NB-ARC domain in the interval 141-440 (TEQPPPPVVE…GEGFIDEKDG (300 aa)). Position 183 to 190 (183 to 190 (GMGGVGKT)) interacts with ATP. LRR repeat units follow at residues 510 to 531 (TVTK…PEFP), 535 to 556 (NLVT…FFLV), 559 to 581 (TLVV…ISAL), 583 to 604 (SLRL…LGVL), and 606 to 628 (KLIH…SELQ).

Belongs to the disease resistance NB-LRR family.

In terms of biological role, probable disease resistance protein. The protein is Probable disease resistance protein At5g47250 of Arabidopsis thaliana (Mouse-ear cress).